The chain runs to 432 residues: Solute carrier family 35 member F5 (432 aa).

Residues 1–33 form the signal peptide; the sequence is MFLPSTTNHSSAPLQKHLCLFCTFWALLFGSHG. Serine 116 is subject to Phosphoserine. 8 helical membrane-spanning segments follow: residues 152–172, 177–197, 205–225, 236–256, 270–290, 304–324, 329–349, and 361–381; these read ISFF…EALS, AIVN…AAVF, FTLS…LVNL, TIGS…IVMI, MFFG…FFLL, VVLM…EFLW, FLTS…LSII, and WLFF…TLLC. The region spanning 161 to 225 is the EamA domain; that stretch reads FLANLSYQEA…SIGGVVLVNL (65 aa).

The protein belongs to the SLC35F solute transporter family.

The protein localises to the membrane. In terms of biological role, putative solute transporter. This is Solute carrier family 35 member F5 (SLC35F5) from Macaca fascicularis (Crab-eating macaque).